Here is a 690-residue protein sequence, read N- to C-terminus: ATP-dependent DNA helicase Hel308 (690 aa).

ATP-binding positions include Gln-26 and Ile-45–Thr-52. One can recognise a Helicase ATP-binding domain in the interval Ala-32–Asp-188. A DEAH box motif is present at residues Asp-133–His-136. In terms of domain architecture, Helicase C-terminal spans Glu-208–Ile-417.

It belongs to the helicase family. Hel308 subfamily. As to quaternary structure, monomer. Binds replication protein A (RPA), in presence and absence of DNA.

It carries out the reaction Couples ATP hydrolysis with the unwinding of duplex DNA by translocating in the 3'-5' direction.. It catalyses the reaction ATP + H2O = ADP + phosphate + H(+). Functionally, DNA-dependent ATPase and 3'-5' DNA helicase that may be involved in repair of stalled replication forks. Helicase with 3'-to 5'- polarity; able to unwind over 100 bp of DNA at 50 degrees Celsius. Unwinds forked DNA, preferentially on lagging strand forks; has weaker activity on Holliday junctions. Displaces the invading strand in DNA D-loops. Unwinds short oligonucleotides from dsDNA with 3'- but not blunt ends or 5'-ssDNA tails in an ATP-dependent manner. ATPase activity is stimulated by ssDNA but not dsDNA, protein binds ssDNA, dsDNA with 5'- or 3'-overhangs but not blunt ended dsDNA and replication forks. Replication forks bind both this protein and RPA. RPA does not stimulate the helicase activity of this protein. This chain is ATP-dependent DNA helicase Hel308, found in Methanothermobacter thermautotrophicus (strain ATCC 29096 / DSM 1053 / JCM 10044 / NBRC 100330 / Delta H) (Methanobacterium thermoautotrophicum).